A 1051-amino-acid polypeptide reads, in one-letter code: Protein ALWAYS EARLY 2 (1051 aa).

Basic residues-rich tracts occupy residues Met1 to Asn11 and Ser27 to Leu36. Positions Met1 to Ser37 are disordered. The 55-residue stretch at Lys39–Pro93 folds into the SANT domain. Disordered stretches follow at residues Glu114–Pro158, Ala170–Phe210, Thr225–Thr293, Ala323–Ala375, Ser397–Ser605, and Ser948–Met981. The span at Gly120–Arg130 shows a compositional bias: basic and acidic residues. Basic residues predominate over residues Lys131–Pro140. A compositionally biased stretch (basic and acidic residues) spans Glu279–Thr293. Residues Ala323–Gly332 are compositionally biased toward acidic residues. 2 stretches are compositionally biased toward basic and acidic residues: residues Ala350–Thr372 and Leu403–Ser417. A compositionally biased stretch (polar residues) spans Lys560–Pro574. Over residues Leu586–His597 the composition is skewed to basic and acidic residues. Residues Asn967–Met981 show a composition bias toward polar residues.

As to quaternary structure, interacts with SNL1 (via PAH3). In terms of tissue distribution, expressed ubiquitously in vegetative and reproductive tissues.

The protein localises to the nucleus. The protein is Protein ALWAYS EARLY 2 (ALY2) of Arabidopsis thaliana (Mouse-ear cress).